An 871-amino-acid chain; its full sequence is Alanine--tRNA ligase (871 aa).

Zn(2+) is bound by residues histidine 563, histidine 567, cysteine 665, and histidine 669.

This sequence belongs to the class-II aminoacyl-tRNA synthetase family. Requires Zn(2+) as cofactor.

The protein localises to the cytoplasm. It carries out the reaction tRNA(Ala) + L-alanine + ATP = L-alanyl-tRNA(Ala) + AMP + diphosphate. Catalyzes the attachment of alanine to tRNA(Ala) in a two-step reaction: alanine is first activated by ATP to form Ala-AMP and then transferred to the acceptor end of tRNA(Ala). Also edits incorrectly charged Ser-tRNA(Ala) and Gly-tRNA(Ala) via its editing domain. The sequence is that of Alanine--tRNA ligase from Christiangramia forsetii (strain DSM 17595 / CGMCC 1.15422 / KT0803) (Gramella forsetii).